A 150-amino-acid polypeptide reads, in one-letter code: Large ribosomal subunit protein bL9 (150 aa).

Belongs to the bacterial ribosomal protein bL9 family.

In terms of biological role, binds to the 23S rRNA. The polypeptide is Large ribosomal subunit protein bL9 (Pseudoalteromonas atlantica (strain T6c / ATCC BAA-1087)).